The chain runs to 98 residues: Cell cycle protein GpsB (98 aa).

The stretch at 34 to 72 (LDMVIKDYEAFHQEIEELQQENLQLKKQLEEANKRQPAQ) forms a coiled coil.

Belongs to the GpsB family. As to quaternary structure, forms polymers through the coiled coil domains. Interacts with PBP1, MreC and EzrA.

It is found in the cytoplasm. Its function is as follows. Divisome component that associates with the complex late in its assembly, after the Z-ring is formed, and is dependent on DivIC and PBP2B for its recruitment to the divisome. Together with EzrA, is a key component of the system that regulates PBP1 localization during cell cycle progression. Its main role could be the removal of PBP1 from the cell pole after pole maturation is completed. Also contributes to the recruitment of PBP1 to the division complex. Not essential for septum formation. The protein is Cell cycle protein GpsB of Bacillus licheniformis (strain ATCC 14580 / DSM 13 / JCM 2505 / CCUG 7422 / NBRC 12200 / NCIMB 9375 / NCTC 10341 / NRRL NRS-1264 / Gibson 46).